A 547-amino-acid chain; its full sequence is Agglutinin-1 (547 aa).

The N-terminal stretch at 1-20 (MKFETTKNKLHGNAYYQAQF) is a signal peptide. At Gln-21 the chain carries Pyrrolidone carboxylic acid. The active site involves Glu-183. Disulfide bonds link Cys-266–Cys-288, Cys-305–Cys-324, and Cys-348–Cys-365. The propeptide at 279-280 (RS) is linker peptide. Residues 292-419 (YEPTVRIGGR…YRMRQGWRTG (128 aa)) enclose the Ricin B-type lectin 1 domain. The 1-alpha repeat unit spans residues 302-344 (DGLCVDVSDNAYNNGNPIILWKCKDQLEVNQLWTLKSDKTIRS). One copy of the 1-beta repeat lies at 345–385 (KGKCLTTYGYAPGNYVMIYDCSSAVAEATYWDIWDNGTIIN). Asn-380 and Asn-420 each carry an N-linked (GlcNAc...) asparagine glycan. Residues 388-420 (SGLVLSAESSSMGGTLTVQKNDYRMRQGWRTGN) form a 1-gamma repeat. The Ricin B-type lectin 2 domain occupies 422-546 (TSPFVTSIAG…GNANQMWATL (125 aa)). A 2-alpha repeat occupies 433–468 (FKLCMEAHGNSMWLDVCDITKEEQQWAVYPDGSIRP). 2 cysteine pairs are disulfide-bonded: Cys-436-Cys-449 and Cys-475-Cys-492. One copy of the 2-beta repeat lies at 472 to 511 (TNNCLTCEEHKQGATIVMMGCSNAWASQRWVFKSDGTIYN). One copy of the 2-gamma repeat lies at 514–547 (DDMVMDVKSSDPSLKQIILWPYTGNANQMWATLF).

This sequence in the N-terminal section; belongs to the ribosome-inactivating protein family. Type 2 RIP subfamily. As to quaternary structure, heterotetramer of two A and two B chains.

It carries out the reaction Endohydrolysis of the N-glycosidic bond at one specific adenosine on the 28S rRNA.. In terms of biological role, the A chain is responsible for inhibiting protein synthesis through the catalytic inactivation of 60S ribosomal subunits by removing adenine from position 4,324 of 28S rRNA. Less toxic than abrin-a. Functionally, the B chain is a galactose-specific lectin that facilitates the binding to the cell membrane that precedes endocytosis. The sequence is that of Agglutinin-1 from Abrus precatorius (Indian licorice).